The chain runs to 146 residues: uncharacterized protein (146 aa).

It to E.coli YmfS.

This is an uncharacterized protein from Escherichia coli (strain K12).